Here is a 374-residue protein sequence, read N- to C-terminus: 4-galactosyl-N-acetylglucosaminide 3-alpha-L-fucosyltransferase FUT5 (374 aa).

Over 1-15 the chain is Cytoplasmic; it reads MDLLGAAKPQWPWRR. The chain crosses the membrane as a helical; Signal-anchor for type II membrane protein span at residues 16 to 34; it reads CLAGLLFQLLVAVCFFSYL. The Lumenal portion of the chain corresponds to 35-374; the sequence is RVSRDDATGS…TVRSIAAWFN (340 aa). 4 N-linked (GlcNAc...) asparagine glycosylation sites follow: Asn-60, Asn-105, Asn-167, and Asn-198.

Belongs to the glycosyltransferase 10 family.

Its subcellular location is the golgi apparatus. The protein localises to the golgi stack membrane. The catalysed reaction is a beta-D-galactosyl-(1-&gt;3)-N-acetyl-beta-D-glucosaminyl derivative + GDP-beta-L-fucose = a beta-D-galactosyl-(1-&gt;3)-[alpha-L-fucosyl-(1-&gt;4)]-N-acetyl-beta-D-glucosaminyl derivative + GDP + H(+). It carries out the reaction an N-acetyl-alpha-neuraminyl-(2-&gt;3)-beta-D-galactosyl-(1-&gt;4)-N-acetyl-beta-D-glucosaminyl derivative + GDP-beta-L-fucose = an alpha-Neu5Ac-(2-&gt;3)-beta-D-Gal-(1-&gt;4)-[alpha-L-Fuc-(1-&gt;3)]-beta-D-GlcNAc derivative + GDP + H(+). The enzyme catalyses an alpha-Neu5Ac-(2-&gt;3)-beta-D-Gal-(1-&gt;4)-beta-D-GlcNAc-(1-&gt;3)-beta-D-Gal-(1-&gt;4)-[alpha-L-Fuc-(1-&gt;3)]-beta-D-GlcNAc derivative + GDP-beta-L-fucose = an alpha-Neu5Ac-(2-&gt;3)-beta-D-Gal-(1-&gt;4)-[alpha-L-Fuc-(1-&gt;3)]-beta-D-GlcNAc-(1-&gt;3)-beta-D-Gal-(1-&gt;4)-[alpha-L-Fuc-(1-&gt;3)]-beta-D-GlcNAc derivative + GDP + H(+). It catalyses the reaction a beta-D-galactosyl-(1-&gt;4)-N-acetyl-beta-D-glucosaminyl derivative + GDP-beta-L-fucose = a beta-D-galactosyl-(1-&gt;4)-[alpha-L-fucosyl-(1-&gt;3)]-N-acetyl-beta-D-glucosaminyl derivative + GDP + H(+). The catalysed reaction is a neolactoside nLc4Cer + GDP-beta-L-fucose = a neolactoside III(3)-alpha-Fuc-nLc4Cer + GDP + H(+). It carries out the reaction a neolactoside nLc6Cer + GDP-beta-L-fucose = beta-D-galactosyl-(1-&gt;4)-N-acetyl-beta-D-glucosaminyl-(1-&gt;3)-beta-D-galactosyl-(1-&gt;4)-[alpha-L-fucosyl-(1-&gt;3)]-N-acetyl-beta-D-glucosaminyl-(1-&gt;3)-beta-D-galactosyl-(1-&gt;4)-beta-D-glucosyl-(1&lt;-&gt;1')-ceramide + GDP + H(+). The enzyme catalyses a neolactoside nLc6Cer(d18:1(4E)) + GDP-beta-L-fucose = a neolactoside III(3)-alpha-Fuc-nLc6Cer(d18:1(4E)) + GDP + H(+). It catalyses the reaction a neolactoside nLc4Cer(d18:1(4E)) + GDP-beta-L-fucose = a neolactoside III(3)-alpha-Fuc-nLc4Cer(d18:1(4E)) + GDP + H(+). The catalysed reaction is a neolactoside VI(3)-alpha-NeuNAc-nLc6Cer + GDP-beta-L-fucose = a neolactoside VI(3)-alpha-NeuAc,III(3)-alphaFuc-nLc6Cer + GDP + H(+). It carries out the reaction beta-D-galactosyl-(1-&gt;4)-N-acetyl-D-glucosamine + GDP-beta-L-fucose = beta-D-galactosyl-(1-&gt;4)-[alpha-L-fucosyl-(1-&gt;3)]-N-acetyl-D-glucosamine + GDP + H(+). The enzyme catalyses N-acetyl-alpha-neuraminosyl-(2-&gt;3)-beta-D-galactosyl-(1-&gt;4)-N-acetyl-beta-D-glucosamine + GDP-beta-L-fucose = N-acetyl-alpha-neuraminosyl-(2-&gt;3)-beta-D-galactosyl-(1-&gt;4)-[alpha-L-fucosyl-(1-&gt;3)]-N-acetyl-beta-D-glucosamine + GDP + H(+). It catalyses the reaction alpha-L-Fuc-(1-&gt;2)-beta-D-Gal-(1-&gt;4)-D-GlcNAc + GDP-beta-L-fucose = alpha-L-Fuc-(1-&gt;2)-beta-D-Gal-(1-&gt;4)-[alpha-L-Fuc-(1-&gt;3)]-D-GlcNAc + GDP + H(+). The catalysed reaction is an alpha-Neu5Ac-(2-&gt;3)-beta-D-Gal-(1-&gt;3)-D-GlcNAc derivative + GDP-beta-L-fucose = an alpha-Neu5Ac-(2-&gt;3)-beta-D-Gal-(1-&gt;3)-[alpha-L-Fuc-(1-&gt;4)]-beta-D-GlcNAc derivative + GDP + H(+). It participates in protein modification; protein glycosylation. Catalyzes preferentially the transfer of L-fucose, from a guanosine diphosphate-beta-L-fucose, to the N-acetyl-beta-D-glucosamine (GlcNAc) of an N-acetyllactosamine unit (type 2 chain) of an oligosaccharide, or a glycoprotein- and a glycolipid-linked N-acetyllactosamine unit via an alpha (1,3) linkage and participates in the surface expression of VIM-2, Lewis X/SSEA-1 and sialyl Lewis X antigens. Preferentially transfers fucose to the GlcNAc of an internal N-acetyllactosamine unit of a poly-N-acetyllactosamine chain acceptor substrate. Also catalyzes to a lesser extend the transfer of L-fucose to the GlcNAc of a type 1 (beta-D-galactosyl-(1-&gt;3)-N-acetyl-beta-D-glucosaminyl) or H-type 1 (alpha-L-Fuc-(1-&gt;2)-beta-D-Gal-(1-&gt;3)-D-GlcNAc) chain oligosaccharide via an alpha (1,4) linkage. Preferentially catalyzes sialylated type 2 oligosaccharide acceptors over neutral type 2 or H type 2 (alpha-L-Fuc-(1-&gt;2)-beta-D-Gal-(1-&gt;4)-D-GlcNAc) oligosaccharide acceptors. Lactose-based structures are also acceptor substrates. This Hylobates lar (Lar gibbon) protein is 4-galactosyl-N-acetylglucosaminide 3-alpha-L-fucosyltransferase FUT5.